The chain runs to 290 residues: Bifunctional protein FolD (290 aa).

NADP(+) is bound by residues 167–169, S192, and I233; that span reads GRS.

It belongs to the tetrahydrofolate dehydrogenase/cyclohydrolase family. Homodimer.

The catalysed reaction is (6R)-5,10-methylene-5,6,7,8-tetrahydrofolate + NADP(+) = (6R)-5,10-methenyltetrahydrofolate + NADPH. The enzyme catalyses (6R)-5,10-methenyltetrahydrofolate + H2O = (6R)-10-formyltetrahydrofolate + H(+). It functions in the pathway one-carbon metabolism; tetrahydrofolate interconversion. Its function is as follows. Catalyzes the oxidation of 5,10-methylenetetrahydrofolate to 5,10-methenyltetrahydrofolate and then the hydrolysis of 5,10-methenyltetrahydrofolate to 10-formyltetrahydrofolate. This chain is Bifunctional protein FolD, found in Azorhizobium caulinodans (strain ATCC 43989 / DSM 5975 / JCM 20966 / LMG 6465 / NBRC 14845 / NCIMB 13405 / ORS 571).